The sequence spans 885 residues: GPI ethanolamine phosphate transferase 2 (885 aa).

N-linked (GlcNAc...) asparagine glycans are attached at residues asparagine 82, asparagine 155, and asparagine 194. The helical transmembrane segment at 413 to 433 (DIYAGALILVITALAVIVVFN) threads the bilayer. An N-linked (GlcNAc...) asparagine glycan is attached at asparagine 443. A run of 3 helical transmembrane segments spans residues 447 to 467 (VMFYELFVVLYSLHFHGSSLI), 473 to 493 (IWYFFTTATLLFLAITFFDTF), and 495 to 514 (SLQNFISFGVLFACIRFMRS). Residue asparagine 516 is glycosylated (N-linked (GlcNAc...) asparagine). Helical transmembrane passes span 539 to 559 (LMWGLIILTYFVLTLCIYIQG), 581 to 601 (GLISFIVVFVATSVSFSFKLL), 648 to 668 (IQLSKFTTIILLLLVISRVII), 697 to 717 (ENIPIFLALMFAKFALSKLIY), 726 to 746 (YILTVTMTVLCLQNLTFFCMG), 768 to 788 (VFLVGLLTFVSNFAGPIFWSL), 820 to 840 (ILLVKSLISLFFYTVSAVNLV), and 865 to 885 (SWILFVNVLIDLILAVIVLLF).

The protein belongs to the PIGG/PIGN/PIGO family. PIGG subfamily.

Its subcellular location is the endoplasmic reticulum membrane. Its pathway is glycolipid biosynthesis; glycosylphosphatidylinositol-anchor biosynthesis. Its function is as follows. Ethanolamine phosphate transferase involved in glycosylphosphatidylinositol-anchor biosynthesis. Transfers ethanolamine phosphate to the GPI second mannose. The sequence is that of GPI ethanolamine phosphate transferase 2 (GPI7) from Candida albicans (strain SC5314 / ATCC MYA-2876) (Yeast).